The sequence spans 259 residues: HTH-type transcriptional regulator Rv1719 (259 aa).

Positions 13-75 constitute an HTH iclR-type domain; the sequence is IQVIARAAEL…GARGPYRLGP (63 aa). A DNA-binding region (H-T-H motif) is located at residues 35–54; it reads QAEIGERVGMARSTVSRILN. Residues 88 to 259 form the IclR-ED domain; the sequence is VVTEMHPFLT…AWFNGTEDRK (172 aa).

Homodimer.

Functionally, binds to the upstream region of Rv1714 and probably modulates the expression of the downstream gene(s). This Mycobacterium tuberculosis (strain ATCC 25618 / H37Rv) protein is HTH-type transcriptional regulator Rv1719.